Reading from the N-terminus, the 167-residue chain is Endoribonuclease YbeY (167 aa).

Zn(2+) contacts are provided by H131, H135, and H141.

The protein belongs to the endoribonuclease YbeY family. Requires Zn(2+) as cofactor.

The protein resides in the cytoplasm. Its function is as follows. Single strand-specific metallo-endoribonuclease involved in late-stage 70S ribosome quality control and in maturation of the 3' terminus of the 16S rRNA. The chain is Endoribonuclease YbeY from Rickettsia conorii (strain ATCC VR-613 / Malish 7).